Reading from the N-terminus, the 533-residue chain is Calcium-dependent protein kinase 8 (533 aa).

The tract at residues 1–21 (MGNCCASPGSETGSKKGKPKI) is disordered. Residue Gly-2 is the site of N-myristoyl glycine attachment. Positions 57–315 (YDLGREVGRG…AAQVLEHSWI (259 aa)) constitute a Protein kinase domain. Residues 63 to 71 (VGRGEFGIT) and Lys-86 contribute to the ATP site. Asp-181 serves as the catalytic Proton acceptor. Residue Ser-221 is modified to Phosphoserine. Residues 321–351 (APNVSLGETVKARLKQFSVMNKLKKRALRVI) are autoinhibitory domain. EF-hand domains lie at 358 to 394 (EEVA…GQQQ), 395 to 430 (IPDT…LKKM), 431 to 466 (ANDE…EVDT), and 467 to 502 (NSEE…GTDW). Residues Asp-371, Thr-375, Lys-377, Glu-382, Asp-408, Asp-410, Asp-412, Thr-414, Glu-419, Asp-444, Asn-446, Ser-448, Tyr-450, Glu-455, Asp-480, Asp-482, Asp-484, and Arg-486 each contribute to the Ca(2+) site. Ser-488 carries the post-translational modification Phosphoserine. Glu-491 lines the Ca(2+) pocket. Ser-526 carries the post-translational modification Phosphoserine.

This sequence belongs to the protein kinase superfamily. Ser/Thr protein kinase family. CDPK subfamily.

Its subcellular location is the cell membrane. It carries out the reaction L-seryl-[protein] + ATP = O-phospho-L-seryl-[protein] + ADP + H(+). The catalysed reaction is L-threonyl-[protein] + ATP = O-phospho-L-threonyl-[protein] + ADP + H(+). Activated by calcium. Autophosphorylation may play an important role in the regulation of the kinase activity. May play a role in signal transduction pathways that involve calcium as a second messenger. This chain is Calcium-dependent protein kinase 8 (CPK8), found in Arabidopsis thaliana (Mouse-ear cress).